A 467-amino-acid polypeptide reads, in one-letter code: MRLLILLLLPLVAIAQDDYCFSKDTSRLQTRQFSSKTAYQIVKGTDIDKQYLVPGCQPQKMWIFHRHGTRLPKKSMINKASRVAELRDLIINNYQVARTKPETDALCQTDLIAIKLWKWNSSITPDMEEYLTAQGYEDLRGTAKLYQRYYPTVLTANYNDTYYQFRHTDTQRTTESFKAFAEGLFGSQNAAHPVEIPKQDLLLRPYDYCSSFKNVNYKDEGSEYYKFHQSKLYNDTLADISTRLGFLYTLEEADIKLMYDMCRYEQAWNVDRNSVWCGAFLPEQITVFEYLEDLKYYYGSGYGFPENAHLNCRLVQDLLTHLSNPVSPHVVAHFGHSTGLLTLLTALGIQKDDIKLRADNYDSLTSRRWKSSLIDPFAANFVAVKYDCPADLDREKVVFFLNQQAVQLDWCSVGLCKWSDVLEKYKTIADADCGEYYCRTGGAPSLGSGVGGLLATTLAAMLVYLMH.

Positions 1–15 are cleaved as a signal peptide; the sequence is MRLLILLLLPLVAIA. Residue H67 is part of the active site. N120, N159, and N234 each carry an N-linked (GlcNAc...) asparagine glycan. G441 carries GPI-anchor amidated glycine lipidation. Residues 442–467 constitute a propeptide, removed in mature form; sequence GAPSLGSGVGGLLATTLAAMLVYLMH.

It belongs to the histidine acid phosphatase family. MINPP1 subfamily. N-glycosylated.

The protein resides in the cell membrane. It localises to the apical cell membrane. Its subcellular location is the basolateral cell membrane. It is found in the cell projection. The protein localises to the filopodium. The protein resides in the cell junction. It carries out the reaction (2R)-2,3-bisphosphoglycerate + H2O = (2R)-2-phosphoglycerate + phosphate. The catalysed reaction is 1D-myo-inositol hexakisphosphate + H2O = 1D-myo-inositol 1,2,4,5,6-pentakisphosphate + phosphate. The enzyme catalyses 1D-myo-inositol 1,2,4,5,6-pentakisphosphate + H2O = 1D-myo-inositol 1,2,5,6-tetrakisphosphate + phosphate. It catalyses the reaction 1D-myo-inositol 1,2,5,6-tetrakisphosphate + H2O = 1D-myo-inositol 1,2,6-trisphosphate + phosphate. Its function is as follows. Probable multiple inositol polyphosphate phosphatase that hydrolyzes 1D-myo-inositol 1,3,4,5,6-pentakisphosphate (InsP5[2OH]) and 1D-myo-inositol hexakisphosphate (InsP6) to a range of less phosphorylated inositol phosphates. This regulates the availability of these various small molecule second messengers and metal chelators which control many aspects of cell physiology. May have a dual substrate specificity, and function as a 2,3-bisphosphoglycerate 3-phosphatase hydrolyzing 2,3-bisphosphoglycerate to 2-phosphoglycerate. 2,3-bisphosphoglycerate (BPG) is formed as part of the Rapoport-Luebering glycolytic bypass. Has a role in embryonic tracheal development where it localizes to the leading edge of actively migrating branches. In these leading cells, enhances formation and/or maintenance of filopodia which may drive branch migration and elongation by cell-cell intercalation. The function in tracheal morphogenesis is dependent on its inositol polyphosphate phosphatase activity. The chain is Multiple inositol polyphosphate phosphatase 1 from Drosophila melanogaster (Fruit fly).